Reading from the N-terminus, the 345-residue chain is Phosphoribosylformylglycinamidine cyclo-ligase (345 aa).

The protein belongs to the AIR synthase family.

Its subcellular location is the cytoplasm. It catalyses the reaction 2-formamido-N(1)-(5-O-phospho-beta-D-ribosyl)acetamidine + ATP = 5-amino-1-(5-phospho-beta-D-ribosyl)imidazole + ADP + phosphate + H(+). It participates in purine metabolism; IMP biosynthesis via de novo pathway; 5-amino-1-(5-phospho-D-ribosyl)imidazole from N(2)-formyl-N(1)-(5-phospho-D-ribosyl)glycinamide: step 2/2. The protein is Phosphoribosylformylglycinamidine cyclo-ligase of Klebsiella pneumoniae (strain 342).